The sequence spans 355 residues: (R,S)-reticuline 7-O-methyltransferase (355 aa).

S-adenosyl-L-methionine contacts are provided by residues 197–200 (VGGG), aspartate 221, 221–222 (DL), 241–242 (DM), and lysine 255. Catalysis depends on histidine 259, which acts as the Proton acceptor.

This sequence belongs to the class I-like SAM-binding methyltransferase superfamily. Cation-independent O-methyltransferase family. In terms of assembly, homodimer. In terms of tissue distribution, expressed in capsules, buds and stems, and at lower levels in leaves. Localized to parenchyma cells within the vascular bundle, but only to those cells distal to laticifers. In roots, found in the pericycle within the stele.

The catalysed reaction is (S)-reticuline + S-adenosyl-L-methionine = (S)-laudanine + S-adenosyl-L-homocysteine + H(+). The enzyme catalyses (R)-reticuline + S-adenosyl-L-methionine = (R)-laudanine + S-adenosyl-L-homocysteine + H(+). Catalyzes the transfer of a methyl group to reticuline to form laudanine. Methylates the simple catechols guaiacol and isovanillic acid as well as the tetrahydrobenzylisoquinolines (R)-reticuline, (S)-reticuline, (R,S)-orientaline, (R)-protosinomenine and (R,S)-isoorientaline. Involved in the production of laudanine. This chain is (R,S)-reticuline 7-O-methyltransferase, found in Papaver somniferum (Opium poppy).